Consider the following 527-residue polypeptide: Pyruvate kinase 1, cytosolic (527 aa).

Arg58 contributes to the substrate binding site. Residues Asp60, Ser62, Asp92, and Thr93 each coordinate K(+). An ATP-binding site is contributed by 60–63 (DFSW). Position 256 (Lys256) interacts with substrate. Glu258 provides a ligand contact to Mg(2+). Substrate contacts are provided by Gly281, Asn282, and Thr313. Asn282 serves as a coordination point for Mg(2+).

It belongs to the pyruvate kinase family. In terms of assembly, homotetramer. The cofactor is Mg(2+). It depends on K(+) as a cofactor.

The protein resides in the cytoplasm. It localises to the cytosol. The enzyme catalyses pyruvate + ATP = phosphoenolpyruvate + ADP + H(+). It functions in the pathway carbohydrate degradation; glycolysis; pyruvate from D-glyceraldehyde 3-phosphate: step 5/5. Key regulatory enzyme of the glycolytic pathway that catalyzes the final step of glycolysis, converting ADP and phosphoenolpyruvate (PEP) to ATP and pyruvate by essentially irreversible transphosphorylation. Is critical for plant growth and development. This Oryza sativa subsp. indica (Rice) protein is Pyruvate kinase 1, cytosolic.